The sequence spans 66 residues: Large ribosomal subunit protein bL31 (66 aa).

Zn(2+)-binding residues include Cys16, Cys18, Cys36, and Cys39.

Belongs to the bacterial ribosomal protein bL31 family. Type A subfamily. As to quaternary structure, part of the 50S ribosomal subunit. The cofactor is Zn(2+).

In terms of biological role, binds the 23S rRNA. This Moorella thermoacetica (strain ATCC 39073 / JCM 9320) protein is Large ribosomal subunit protein bL31.